A 614-amino-acid polypeptide reads, in one-letter code: MRNGEYSRSHGRSVRTVHPFLLGVSVYQYPVCRTTVNGSYAQSFAALLFFPQIAVAFSATAPAPSFDSFLSARQRHPPASSFLASPAAPTHPLFATARTTAAQLLSTPPAPARPRPRPDHVIPKEKWRLAVADFTFHGIPKIFQRYVRPARELLFIELKKLPLRHFLSEAEQRERAALPHEEAYHARLKERAHLQRARDFVSLHPVSDHARRLRTAAFEKQIKEKEQEIERARVEVRTARARFFRPWLQAEVLVLGAQNEPHALPERFHLATHLRQKKLSALVTGKLVDVAGYVRISLYLSTGLEAEPTREFTLAGPYRELPRLMHTLSAQLRSAIENAQPVRIVFDVHPPHARLSFQGVPVEDLSKPLISYPGRYVVDVSAAGYFSATKEIYIENRPAFSLRVRLVARPQHRVRVQLTDNSAAPIFSGARSVGVTPFSTVVTDLREIFTVGPAGARSFAFIERGTFPNSQPSTLVLPAPNPNATQDLAYKRDVAYWSFGALCIAVPIALILGSTLADTHQALERAKAASAQPPPPPAPAGTGALERKSQHLLIGTGVAVGVAVILSINFIVHAARYLNAVMHNAPQAVRPRADKDIQTLTHRDEAEEDQEEDS.

Helical transmembrane passes span 494 to 516 (VAYW…GSTL) and 552 to 574 (LLIG…IVHA). The tract at residues 588-614 (AVRPRADKDIQTLTHRDEAEEDQEEDS) is disordered. Over residues 591-605 (PRADKDIQTLTHRDE) the composition is skewed to basic and acidic residues.

Its subcellular location is the cell membrane. This is an uncharacterized protein from Treponema pallidum (strain Nichols).